Here is a 311-residue protein sequence, read N- to C-terminus: Ribosomal RNA small subunit methyltransferase H (311 aa).

S-adenosyl-L-methionine is bound by residues 35 to 37, Asp55, Phe80, Asp102, and Gln109; that span reads GGH.

Belongs to the methyltransferase superfamily. RsmH family.

The protein localises to the cytoplasm. It carries out the reaction cytidine(1402) in 16S rRNA + S-adenosyl-L-methionine = N(4)-methylcytidine(1402) in 16S rRNA + S-adenosyl-L-homocysteine + H(+). Functionally, specifically methylates the N4 position of cytidine in position 1402 (C1402) of 16S rRNA. This is Ribosomal RNA small subunit methyltransferase H from Pseudoalteromonas atlantica (strain T6c / ATCC BAA-1087).